The following is a 115-amino-acid chain: Large ribosomal subunit protein P2 (115 aa).

Met-1 carries the post-translational modification N-acetylmethionine. Phosphoserine is present on residues Ser-17 and Ser-19. The residue at position 21 (Lys-21) is an N6-acetyllysine; alternate. The residue at position 21 (Lys-21) is an N6-succinyllysine; alternate. The span at 76–90 shows a compositional bias: low complexity; the sequence is APGSAAPAAGSAPAA. Residues 76 to 115 form a disordered region; that stretch reads APGSAAPAAGSAPAAAEERKEEKKEESEESDDDMGFGLFD. Phosphoserine occurs at positions 79 and 86. Basic and acidic residues predominate over residues 91-101; it reads AEERKEEKKEE. A phosphoserine mark is found at Ser-102 and Ser-105.

The protein belongs to the eukaryotic ribosomal protein P1/P2 family. Heterodimer with RPLP1 at the lateral ribosomal stalk of the large ribosomal subunit.

Functionally, plays an important role in the elongation step of protein synthesis. The sequence is that of Large ribosomal subunit protein P2 (RPLP2) from Equus caballus (Horse).